Consider the following 385-residue polypeptide: Leucine aminopeptidase 1 (385 aa).

The N-terminal stretch at methionine 1–alanine 20 is a signal peptide. A propeptide spanning residues valine 21–valine 87 is cleaved from the precursor. Asparagine 177 carries N-linked (GlcNAc...) asparagine glycosylation. 4 residues coordinate Zn(2+): histidine 185, aspartate 204, glutamate 243, and aspartate 270. Cysteine 319 and cysteine 323 are oxidised to a cystine. Histidine 352 provides a ligand contact to Zn(2+).

It belongs to the peptidase M28 family. M28E subfamily. In terms of assembly, monomer. Zn(2+) serves as cofactor.

The protein localises to the secreted. Functionally, extracellular aminopeptidase that allows assimilation of proteinaceous substrates. This is Leucine aminopeptidase 1 (LAP1) from Ajellomyces capsulatus (strain NAm1 / WU24) (Darling's disease fungus).